A 367-amino-acid polypeptide reads, in one-letter code: Aminomethyltransferase (367 aa).

This sequence belongs to the GcvT family. The glycine cleavage system is composed of four proteins: P, T, L and H.

The enzyme catalyses N(6)-[(R)-S(8)-aminomethyldihydrolipoyl]-L-lysyl-[protein] + (6S)-5,6,7,8-tetrahydrofolate = N(6)-[(R)-dihydrolipoyl]-L-lysyl-[protein] + (6R)-5,10-methylene-5,6,7,8-tetrahydrofolate + NH4(+). The glycine cleavage system catalyzes the degradation of glycine. The polypeptide is Aminomethyltransferase (Mycolicibacterium paratuberculosis (strain ATCC BAA-968 / K-10) (Mycobacterium paratuberculosis)).